The sequence spans 179 residues: Large ribosomal subunit protein uL5 (179 aa).

Belongs to the universal ribosomal protein uL5 family. As to quaternary structure, part of the 50S ribosomal subunit; part of the 5S rRNA/L5/L18/L25 subcomplex. Contacts the 5S rRNA and the P site tRNA. Forms a bridge to the 30S subunit in the 70S ribosome.

In terms of biological role, this is one of the proteins that bind and probably mediate the attachment of the 5S RNA into the large ribosomal subunit, where it forms part of the central protuberance. In the 70S ribosome it contacts protein S13 of the 30S subunit (bridge B1b), connecting the 2 subunits; this bridge is implicated in subunit movement. Contacts the P site tRNA; the 5S rRNA and some of its associated proteins might help stabilize positioning of ribosome-bound tRNAs. The sequence is that of Large ribosomal subunit protein uL5 from Shewanella sp. (strain MR-4).